The primary structure comprises 224 residues: ATP-dependent dethiobiotin synthetase BioD (224 aa).

Position 18 (Thr18) interacts with Mg(2+). Lys39 is a catalytic residue. Ser43 lines the substrate pocket. Mg(2+) contacts are provided by Asp56 and Glu117. ATP contacts are provided by residues Asp56, Glu117–Gly120, and Asn177–Glu178.

It belongs to the dethiobiotin synthetase family. As to quaternary structure, homodimer. Requires Mg(2+) as cofactor.

It is found in the cytoplasm. The catalysed reaction is (7R,8S)-7,8-diammoniononanoate + CO2 + ATP = (4R,5S)-dethiobiotin + ADP + phosphate + 3 H(+). It functions in the pathway cofactor biosynthesis; biotin biosynthesis; biotin from 7,8-diaminononanoate: step 1/2. Catalyzes a mechanistically unusual reaction, the ATP-dependent insertion of CO2 between the N7 and N8 nitrogen atoms of 7,8-diaminopelargonic acid (DAPA, also called 7,8-diammoniononanoate) to form a ureido ring. The polypeptide is ATP-dependent dethiobiotin synthetase BioD (Xanthomonas axonopodis pv. citri (strain 306)).